We begin with the raw amino-acid sequence, 1909 residues long: DENN domain-containing protein 4C (1909 aa).

One can recognise an MABP domain in the interval 40–199; that stretch reads KAPITDIAII…SVFLCYKKSV (160 aa). The 174-residue stretch at 191–364 folds into the uDENN domain; it reads VFLCYKKSVP…NIPFPSPQRP (174 aa). The 137-residue stretch at 385 to 521 folds into the cDENN domain; it reads PLPLSGANFS…PCKNLLSTLK (137 aa). One can recognise a dDENN domain in the interval 523 to 641; that stretch reads LYPQLSSVHQ…CSFVSDKDTG (119 aa). Phosphoserine occurs at positions 703, 737, and 741. The PPR repeat unit spans residues 821–855; that stretch reads VCYRVVMQLCGLWGHPVLAVRVLFEMKTARIKPNA. 4 positions are modified to phosphoserine: Glu953, Ser965, Ser968, and Ser973. Thr975 is modified (phosphothreonine). Ser989, Ser996, Ser1003, Ser1046, Ser1061, Ser1099, Ser1126, Ser1184, Ser1225, Ser1244, Ser1252, and Ser1278 each carry phosphoserine. 2 disordered regions span residues 1243-1263 and 1277-1338; these read KSPLGSKSSSMELHREENRES and SSLP…HGSL. Positions 1296–1316 are enriched in polar residues; the sequence is SSPAVSRSKTFTGRFKQQTPS. A phosphoserine mark is found at Ser1325, Ser1337, and Ser1346. The tract at residues 1419–1474 is disordered; it reads SGLVPSELTQSNTSLGSSSSSGDVGKLHYPTGEVPFPRGMKGQDFEKSDHGSSQNT. Residues 1426-1440 are compositionally biased toward low complexity; sequence LTQSNTSLGSSSSSG. Basic and acidic residues predominate over residues 1459 to 1468; the sequence is KGQDFEKSDH. Ser1623, Ser1627, Ser1629, Ser1640, and Ser1799 each carry phosphoserine.

In terms of processing, phosphorylated in response to insulin.

It is found in the cytoplasmic vesicle membrane. Its subcellular location is the cell membrane. The protein resides in the cytoplasm. The protein localises to the cytosol. Functionally, guanine nucleotide exchange factor (GEF) activating RAB10. Promotes the exchange of GDP to GTP, converting inactive GDP-bound RAB10 into its active GTP-bound form. Thereby, stimulates SLC2A4/GLUT4 glucose transporter-enriched vesicles delivery to the plasma membrane in response to insulin. In Homo sapiens (Human), this protein is DENN domain-containing protein 4C (DENND4C).